A 225-amino-acid chain; its full sequence is Pre-mRNA-splicing factor SPF27 (225 aa).

Residue Ala2 is modified to N-acetylalanine. Ser94 bears the Phosphoserine mark. Residues 138–222 adopt a coiled-coil conformation; it reads YNENLVHMIE…HGEANKENIR (85 aa).

The protein belongs to the SPF27 family. As to quaternary structure, component of the pre-catalytic and catalytic spliceosome complexes. Component of the postcatalytic spliceosome P complex. Component of the PRP19-CDC5L splicing complex composed of a core complex comprising a homotetramer of PRPF19, CDC5L, PLRG1 and BCAS2, and at least three less stably associated proteins CTNNBL1, CWC15 and HSPA8. Interacts directly in the complex with PRPF19, CDC5L and PLRG1. Ubiquitously expressed.

It localises to the nucleus. It is found in the nucleolus. Its function is as follows. Required for pre-mRNA splicing as component of the activated spliceosome. Component of the PRP19-CDC5L complex that forms an integral part of the spliceosome and is required for activating pre-mRNA splicing. May have a scaffolding role in the spliceosome assembly as it contacts all other components of the core complex. The PRP19-CDC5L complex may also play a role in the response to DNA damage (DDR). The polypeptide is Pre-mRNA-splicing factor SPF27 (BCAS2) (Homo sapiens (Human)).